Consider the following 361-residue polypeptide: Microtubule-associated protein Jupiter (361 aa).

Residues 1 to 15 show a composition bias toward polar residues; the sequence is MISNYDITDSKSSSK. 2 disordered regions span residues 1–38 and 70–99; these read MISN…TPRN and IGDN…TPGK. Phosphoserine is present on S24. Phosphothreonine is present on T35. Basic and acidic residues predominate over residues 73–87; that stretch reads NPRRGQKPVDSHSRL. At T96 the chain carries Phosphothreonine. Phosphoserine is present on S105. Low complexity-rich tracts occupy residues 125–134 and 141–154; these read GSSTANTTNG and SGSV…VSSS. Disordered stretches follow at residues 125-165 and 328-361; these read GSST…SGSR and GSTN…SGLW. S143 and S154 each carry phosphoserine. Over residues 155–165 the composition is skewed to polar residues; the sequence is TENLKMNSGSR.

Belongs to the MAP Jupiter family.

The protein resides in the nucleus. The protein localises to the cytoplasm. It is found in the cytoskeleton. It localises to the spindle. Binds to all microtubule populations. This is Microtubule-associated protein Jupiter from Drosophila persimilis (Fruit fly).